The sequence spans 663 residues: Protein MNE1 (663 aa).

This chain is Protein MNE1 (MNE1), found in Saccharomyces cerevisiae (strain ATCC 204508 / S288c) (Baker's yeast).